The chain runs to 642 residues: tRNA uridine 5-carboxymethylaminomethyl modification enzyme MnmG (642 aa).

An FAD-binding site is contributed by 24–29 (GGGHAG). NAD(+) is bound at residue 284-298 (GPRYCPSIEDKIHRF).

It belongs to the MnmG family. Homodimer. Heterotetramer of two MnmE and two MnmG subunits. FAD serves as cofactor.

It localises to the cytoplasm. Its function is as follows. NAD-binding protein involved in the addition of a carboxymethylaminomethyl (cmnm) group at the wobble position (U34) of certain tRNAs, forming tRNA-cmnm(5)s(2)U34. This chain is tRNA uridine 5-carboxymethylaminomethyl modification enzyme MnmG, found in Psychrobacter sp. (strain PRwf-1).